A 551-amino-acid polypeptide reads, in one-letter code: Calcium-dependent protein kinase 3 (551 aa).

A disordered region spans residues 1 to 57; the sequence is MGNCCRSPAAAAREDVKSSHFPASAGKKKPHQARNGGVGGGGGGGGGGGGGGGAGQK. Residue G2 is the site of N-myristoyl glycine attachment. Residues 36–55 show a composition bias toward gly residues; sequence GGVGGGGGGGGGGGGGGGAG. Residues 77–335 enclose the Protein kinase domain; sequence YALDRELGRG…AKQVLEHPWL (259 aa). Residues 83–91 and K106 contribute to the ATP site; that span reads LGRGEFGVT. The active-site Proton acceptor is D201. Positions 341–371 are autoinhibitory domain; sequence APNVPLGDIVKSRLKQFSRMNRFKRRALRVI. 4 EF-hand domains span residues 378–413, 414–449, 450–485, and 486–521; these read EEVE…FGSH, LAES…LQRM, ANDE…DGAG, and DSME…GTDW. Ca(2+) contacts are provided by D391, D393, D395, E402, D427, N429, E438, D463, D465, N467, Y469, E474, D499, D501, D503, K505, and E510.

It belongs to the protein kinase superfamily. Ser/Thr protein kinase family. CDPK subfamily. As to expression, expressed in roots and developing seeds.

The protein resides in the membrane. The catalysed reaction is L-seryl-[protein] + ATP = O-phospho-L-seryl-[protein] + ADP + H(+). It carries out the reaction L-threonyl-[protein] + ATP = O-phospho-L-threonyl-[protein] + ADP + H(+). With respect to regulation, activated by calcium. Autophosphorylation may play an important role in the regulation of the kinase activity. Its function is as follows. May play a role in signal transduction pathways that involve calcium as a second messenger. The polypeptide is Calcium-dependent protein kinase 3 (Oryza sativa subsp. japonica (Rice)).